The sequence spans 195 residues: Probable GTP-binding protein EngB (195 aa).

An EngB-type G domain is found at 24–195; that stretch reads ELPEIALAGR…EAWDAILEKL (172 aa). Residues 32–39, 59–63, 77–80, 144–147, and 176–178 contribute to the GTP site; these read GRSNVGKS, GKTQL, DVPG, TKAD, and FSS. Positions 39 and 61 each coordinate Mg(2+).

The protein belongs to the TRAFAC class TrmE-Era-EngA-EngB-Septin-like GTPase superfamily. EngB GTPase family. It depends on Mg(2+) as a cofactor.

In terms of biological role, necessary for normal cell division and for the maintenance of normal septation. The chain is Probable GTP-binding protein EngB from Streptococcus pneumoniae (strain P1031).